The sequence spans 355 residues: Probable F-box protein At5g36000 (355 aa).

Residues 1–14 (MNTRSGDAEGDIRG) are compositionally biased toward basic and acidic residues. Residues 1-44 (MNTRSGDAEGDIRGKMIAPVRDGNGGQKRKLVQSNDIQRDEDGG) form a disordered region. An F-box; degenerate domain is found at 78–124 (QSRFSWYEQDIWTYITRFLDGKSLVKLGATNKWFYKIAMEDTVWRFA).

The chain is Probable F-box protein At5g36000 from Arabidopsis thaliana (Mouse-ear cress).